The sequence spans 367 residues: Protein RecA (367 aa).

Polar residues predominate over residues 1-14 (MSTEVNANQSPNAE). The segment at 1–24 (MSTEVNANQSPNAESRQEAARSGE) is disordered. Basic and acidic residues predominate over residues 15-24 (SRQEAARSGE). 84-91 (GPESSGKT) provides a ligand contact to ATP. The interval 348–367 (GSEVSSNSMRPLTTANRKAA) is disordered. The segment covering 349-367 (SEVSSNSMRPLTTANRKAA) has biased composition (polar residues).

The protein belongs to the RecA family.

It localises to the cytoplasm. Functionally, can catalyze the hydrolysis of ATP in the presence of single-stranded DNA, the ATP-dependent uptake of single-stranded DNA by duplex DNA, and the ATP-dependent hybridization of homologous single-stranded DNAs. It interacts with LexA causing its activation and leading to its autocatalytic cleavage. This chain is Protein RecA, found in Prochlorococcus marinus (strain MIT 9211).